The following is a 73-amino-acid chain: MELFIPCPERLKKMMLKEELRKELLILRCLYHPTIQIMLPTLGTLGTEKRKEKYALSLFEPILNCVGSAKTSG.

Post-translationally, N-glycosylated.

This is an uncharacterized protein from Saccharomyces cerevisiae (strain ATCC 204508 / S288c) (Baker's yeast).